The following is a 161-amino-acid chain: SsrA-binding protein (161 aa).

The tract at residues 137–161 (HDKRTDSKEKDWNRDKARIMKSSLR) is disordered. Basic and acidic residues predominate over residues 139–154 (KRTDSKEKDWNRDKAR).

The protein belongs to the SmpB family.

Its subcellular location is the cytoplasm. Its function is as follows. Required for rescue of stalled ribosomes mediated by trans-translation. Binds to transfer-messenger RNA (tmRNA), required for stable association of tmRNA with ribosomes. tmRNA and SmpB together mimic tRNA shape, replacing the anticodon stem-loop with SmpB. tmRNA is encoded by the ssrA gene; the 2 termini fold to resemble tRNA(Ala) and it encodes a 'tag peptide', a short internal open reading frame. During trans-translation Ala-aminoacylated tmRNA acts like a tRNA, entering the A-site of stalled ribosomes, displacing the stalled mRNA. The ribosome then switches to translate the ORF on the tmRNA; the nascent peptide is terminated with the 'tag peptide' encoded by the tmRNA and targeted for degradation. The ribosome is freed to recommence translation, which seems to be the essential function of trans-translation. This Aliivibrio salmonicida (strain LFI1238) (Vibrio salmonicida (strain LFI1238)) protein is SsrA-binding protein.